The primary structure comprises 248 residues: Tyrosine recombinase XerD-like (248 aa).

The 72-residue stretch at 1–72 (MKSYIEPFIA…TANQFLYYLY (72 aa)) folds into the Core-binding (CB) domain. In terms of domain architecture, Tyr recombinase spans 85–248 (DTMKVMRTEK…PVTLEKYYKS (164 aa)). Active-site residues include Lys-149 and Arg-213. The active-site O-(3'-phospho-DNA)-tyrosine intermediate is the Tyr-245.

The protein belongs to the 'phage' integrase family. XerD-like subfamily.

It is found in the cytoplasm. Putative tyrosine recombinase. Not involved in the cutting and rejoining of the recombining DNA molecules on dif(SL) site. The protein is Tyrosine recombinase XerD-like of Streptococcus pyogenes serotype M4 (strain MGAS10750).